A 140-amino-acid chain; its full sequence is MKERTFVALKPDAVKRKLIGKIIERFENKGFEIVAMKMIKLDREMAEKYYEEHKGKEFYERLINFMTSGRMIVMVVEGENAISVVRKMIGKTNPAEAEPGTIRGDFALTTPDNIIHASDSKESAEREIKLFFKEDEIFDK.

ATP contacts are provided by Lys10, Phe58, Arg86, Thr92, Arg103, and Asn113. His116 functions as the Pros-phosphohistidine intermediate in the catalytic mechanism.

Belongs to the NDK family. Homohexamer. Mg(2+) is required as a cofactor.

The protein localises to the cytoplasm. The catalysed reaction is a 2'-deoxyribonucleoside 5'-diphosphate + ATP = a 2'-deoxyribonucleoside 5'-triphosphate + ADP. It catalyses the reaction a ribonucleoside 5'-diphosphate + ATP = a ribonucleoside 5'-triphosphate + ADP. Major role in the synthesis of nucleoside triphosphates other than ATP. The ATP gamma phosphate is transferred to the NDP beta phosphate via a ping-pong mechanism, using a phosphorylated active-site intermediate. The sequence is that of Nucleoside diphosphate kinase from Methanocaldococcus jannaschii (strain ATCC 43067 / DSM 2661 / JAL-1 / JCM 10045 / NBRC 100440) (Methanococcus jannaschii).